The primary structure comprises 132 residues: Small ribosomal subunit protein uS8 (132 aa).

Belongs to the universal ribosomal protein uS8 family. As to quaternary structure, part of the 30S ribosomal subunit. Contacts proteins S5 and S12.

Functionally, one of the primary rRNA binding proteins, it binds directly to 16S rRNA central domain where it helps coordinate assembly of the platform of the 30S subunit. This is Small ribosomal subunit protein uS8 from Mycobacterium avium (strain 104).